We begin with the raw amino-acid sequence, 249 residues long: ATP synthase subunit a (249 aa).

Helical transmembrane passes span Q30–M50, F86–L106, H115–I135, F146–S166, V191–I211, and I218–L238.

This sequence belongs to the ATPase A chain family. F-type ATPases have 2 components, CF(1) - the catalytic core - and CF(0) - the membrane proton channel. CF(1) has five subunits: alpha(3), beta(3), gamma(1), delta(1), epsilon(1). CF(0) has three main subunits: a(1), b(2) and c(9-12). The alpha and beta chains form an alternating ring which encloses part of the gamma chain. CF(1) is attached to CF(0) by a central stalk formed by the gamma and epsilon chains, while a peripheral stalk is formed by the delta and b chains.

The protein localises to the cell inner membrane. Its function is as follows. Key component of the proton channel; it plays a direct role in the translocation of protons across the membrane. In Gluconobacter oxydans (strain 621H) (Gluconobacter suboxydans), this protein is ATP synthase subunit a.